We begin with the raw amino-acid sequence, 86 residues long: MVNMKCVALIVIVMMAFMMVDPSMGVGECVRGRCPSGMCCSQFGYCGKGPKYCGRASTTVDHQADVAATKTAKNPTDAKLAGAGSP.

The N-terminal stretch at 1-25 (MVNMKCVALIVIVMMAFMMVDPSMG) is a signal peptide. Cystine bridges form between cysteine 29-cysteine 40, cysteine 34-cysteine 46, and cysteine 39-cysteine 53. Residues 29–53 (CVRGRCPSGMCCSQFGYCGKGPKYC) form the Chitin-binding type-1 domain. The propeptide at 56–86 (ASTTVDHQADVAATKTAKNPTDAKLAGAGSP) is removed in mature form.

In terms of assembly, homodimer.

Its function is as follows. Chitin-binding protein with a defensive function against numerous chitin containing fungal pathogens. It is also a potent inhibitor of Gram-positive bacteria. This is Antimicrobial peptide 2 from Amaranthus caudatus (Love-lies-bleeding).